The primary structure comprises 217 residues: MGQKVNPLGIRLNITRTWDSVWYADKDYSTFLIEDQKIRKFLKKRLSHAGLSSVKIERTGEQVRIKLFTARPGIVIGKKGAEIEILKRELEKLVSRKVTLDIQEVRRPEADAQLVADNIAQQLARRVAFRRAMKKAVSSALRFGVQGIKIACSGRLGGAEMSRCEWVREGRVPLHTLRADVDYALSESHTTYGIIGVKVWIFKGEVLSDKDKGAVAQ.

One can recognise a KH type-2 domain in the interval 38-106; it reads IRKFLKKRLS…KVTLDIQEVR (69 aa).

It belongs to the universal ribosomal protein uS3 family. In terms of assembly, part of the 30S ribosomal subunit. Forms a tight complex with proteins S10 and S14.

Its function is as follows. Binds the lower part of the 30S subunit head. Binds mRNA in the 70S ribosome, positioning it for translation. This Desulfotalea psychrophila (strain LSv54 / DSM 12343) protein is Small ribosomal subunit protein uS3.